The following is a 68-amino-acid chain: Tau-scoloptoxin(04)-Ssm1b (68 aa).

A signal peptide spans 1–25 (MLKSFCILSVFMVLFLAKFPDLCSG). A propeptide spanning residues 26–36 (EEISPLKIVVR) is cleaved from the precursor. Cystine bridges form between Cys45/Cys56 and Cys50/Cys63. The highly charged C-terminal region, binds to TRPV1 channel stretch occupies residues 55–67 (RCSIVDKQCIKKE).

The protein belongs to the scoloptoxin-04 family. In terms of tissue distribution, expressed by the venom gland.

It is found in the secreted. Extremely potent agonist and potentiator of TRPV1 (EC(50)=470-521.5 nM (mouse)). It strongly promotes the heat activation process by downshifting the activation threshold temperature. It preferably binds to the activated channel and promotes its opening. Holding the channel closed by cooling prevents binding of this toxin, leaving it ineffective. The toxin binds to the charge-rich outer pore region of the channel where it directly interacts with the pore helix and turret, two adjacent structural elements known to be critical for activation gating of TRPV1. In comparison with Sm1b, induces a TRPV1 desensitization with slower kinetics (20 seconds). In vivo, induces pain in mice after intraplantar injection. In terms of biological role, potent agonist and probable potentiator of TRPV1 (EC(50)=38.35 uM (mouse)). Also binds to the outer pore region of TRPV1. In comparison with Sm1a, induces a TRPV1 desensitization with faster kinetics (2 seconds) and leads to a more complete TRPV1 desensitization. Desensitization is achieved by reducing both the open probability and the single-channel conductance upon prolonged exposure. This Scolopendra mutilans (Chinese red-headed centipede) protein is Tau-scoloptoxin(04)-Ssm1b.